Reading from the N-terminus, the 307-residue chain is Transaldolase (307 aa).

K125 (schiff-base intermediate with substrate) is an active-site residue.

The protein belongs to the transaldolase family. Type 1 subfamily. Homodimer.

It localises to the cytoplasm. It carries out the reaction D-sedoheptulose 7-phosphate + D-glyceraldehyde 3-phosphate = D-erythrose 4-phosphate + beta-D-fructose 6-phosphate. Its pathway is carbohydrate degradation; pentose phosphate pathway; D-glyceraldehyde 3-phosphate and beta-D-fructose 6-phosphate from D-ribose 5-phosphate and D-xylulose 5-phosphate (non-oxidative stage): step 2/3. Its function is as follows. Transaldolase is important for the balance of metabolites in the pentose-phosphate pathway. The sequence is that of Transaldolase from Pseudomonas paraeruginosa (strain DSM 24068 / PA7) (Pseudomonas aeruginosa (strain PA7)).